The primary structure comprises 53 residues: MSHALPALIKMHITKDIGYGLLLGIIPGVWFKYQIGQSIQKREDFYAAYDKRN.

As to quaternary structure, slime mold cytochrome c oxidase consists of at least seven different polypeptides species, subunits I, II, III, IV, V, VI, and VIIe/s in order of MW.

The protein resides in the mitochondrion inner membrane. The enzyme catalyses 4 Fe(II)-[cytochrome c] + O2 + 8 H(+)(in) = 4 Fe(III)-[cytochrome c] + 2 H2O + 4 H(+)(out). In terms of biological role, this protein is one of the nuclear-coded polypeptide chains of cytochrome c oxidase, the terminal oxidase in mitochondrial electron transport. The sequence is that of Cytochrome c oxidase subunit 7e (cxgE) from Dictyostelium discoideum (Social amoeba).